The following is a 461-amino-acid chain: Chromosomal replication initiator protein DnaA (461 aa).

A domain I, interacts with DnaA modulators region spans residues 1–90 (MAVSLWQQCI…RPSARPVAPA (90 aa)). A domain II region spans residues 91 to 124 (PVAAKPVNRQTKAQVGTTSFNTQAEPIINPNHRS). The tract at residues 125 to 341 (NINPTYQFDN…GALNRVIANA (217 aa)) is domain III, AAA+ region. ATP-binding residues include Gly-169, Gly-171, Lys-172, and Thr-173. The tract at residues 342–461 (NFTGRPITID…YANLIRTLSS (120 aa)) is domain IV, binds dsDNA.

This sequence belongs to the DnaA family. Oligomerizes as a right-handed, spiral filament on DNA at oriC.

It is found in the cytoplasm. Functionally, plays an essential role in the initiation and regulation of chromosomal replication. ATP-DnaA binds to the origin of replication (oriC) to initiate formation of the DNA replication initiation complex once per cell cycle. Binds the DnaA box (a 9 base pair repeat at the origin) and separates the double-stranded (ds)DNA. Forms a right-handed helical filament on oriC DNA; dsDNA binds to the exterior of the filament while single-stranded (ss)DNA is stabiized in the filament's interior. The ATP-DnaA-oriC complex binds and stabilizes one strand of the AT-rich DNA unwinding element (DUE), permitting loading of DNA polymerase. After initiation quickly degrades to an ADP-DnaA complex that is not apt for DNA replication. Binds acidic phospholipids. The sequence is that of Chromosomal replication initiator protein DnaA from Shewanella frigidimarina (strain NCIMB 400).